We begin with the raw amino-acid sequence, 290 residues long: 33 kDa chaperonin (290 aa).

2 disulfide bridges follow: cysteine 235–cysteine 237 and cysteine 268–cysteine 271.

The protein belongs to the HSP33 family. In terms of processing, under oxidizing conditions two disulfide bonds are formed involving the reactive cysteines. Under reducing conditions zinc is bound to the reactive cysteines and the protein is inactive.

Its subcellular location is the cytoplasm. Functionally, redox regulated molecular chaperone. Protects both thermally unfolding and oxidatively damaged proteins from irreversible aggregation. Plays an important role in the bacterial defense system toward oxidative stress. In Streptococcus pneumoniae serotype 19F (strain G54), this protein is 33 kDa chaperonin.